Reading from the N-terminus, the 278-residue chain is HTH-type transcriptional activator RhaS (278 aa).

The 99-residue stretch at N174–G272 folds into the HTH araC/xylS-type domain. 2 DNA-binding regions (H-T-H motif) span residues D191–T212 and V239–F262.

In terms of assembly, binds DNA as a dimer.

The protein resides in the cytoplasm. Its function is as follows. Activates expression of the rhaBAD and rhaT operons. This Shigella dysenteriae serotype 1 (strain Sd197) protein is HTH-type transcriptional activator RhaS.